The primary structure comprises 835 residues: Ion-translocating oxidoreductase complex subunit C (835 aa).

2 consecutive 4Fe-4S ferredoxin-type domains span residues 368-397 (YAPP…QQLY) and 407-436 (KSEE…IQYF). [4Fe-4S] cluster contacts are provided by cysteine 377, cysteine 380, cysteine 383, cysteine 387, cysteine 416, cysteine 419, cysteine 422, and cysteine 426. Positions 468-489 (AREEQERKARAQKAMEARRQEM) are enriched in basic and acidic residues. Disordered regions lie at residues 468–492 (AREE…MKTA), 540–574 (QRKA…SKSA), 586–618 (KAAQ…AEDP), 634–666 (KAAQ…ADDP), 682–714 (KAAQ…ADDP), 730–762 (KAAQ…AEDP), and 778–811 (KAAQ…EDPR). Positions 552–561 (TQNTDVSQVE) are enriched in polar residues. The segment covering 648–657 (SSSNTLSVGN) has biased composition (polar residues). 2 stretches are compositionally biased toward polar residues: residues 745 to 756 (SSDTLSVGNETE) and 793 to 804 (SSDTLSVGNETE).

This sequence belongs to the 4Fe4S bacterial-type ferredoxin family. RnfC subfamily. As to quaternary structure, the complex is composed of six subunits: RnfA, RnfB, RnfC, RnfD, RnfE and RnfG. It depends on [4Fe-4S] cluster as a cofactor.

Its subcellular location is the cell inner membrane. Part of a membrane-bound complex that couples electron transfer with translocation of ions across the membrane. In Pasteurella multocida (strain Pm70), this protein is Ion-translocating oxidoreductase complex subunit C.